The chain runs to 206 residues: Ras-related protein Rab-18 (206 aa).

An N-acetylmethionine modification is found at Met1. Positions 17, 20, 21, 22, 23, 34, 35, 40, 66, 123, and 125 each coordinate GTP. Residue Ser22 participates in Mg(2+) binding. 2 short sequence motifs (switch) span residues 31–45 and 63–80; these read DTFDPELAATIGVDF and DTAGQERFRTLTPSYYRG. Mg(2+) is bound at residue Thr40. Position 144 is a phosphoserine (Ser144). Ala152 is a GTP binding site. A lipid anchor (S-palmitoyl cysteine) is attached at Cys199. At Cys203 the chain carries Cysteine methyl ester. A lipid anchor (S-geranylgeranyl cysteine) is attached at Cys203. A propeptide spans 204–206 (removed in mature form); that stretch reads SVL.

It belongs to the small GTPase superfamily. Rab family. In terms of assembly, interacts (in GTP-bound form) with ZFYVE1. Interacts with ZW10 and this interaction is enhanced in the presence of ZFYVE1. Interacts with BSCL2. Mg(2+) serves as cofactor.

Its subcellular location is the endoplasmic reticulum membrane. The protein localises to the golgi apparatus. It is found in the cis-Golgi network membrane. It localises to the lipid droplet. The protein resides in the apical cell membrane. It catalyses the reaction GTP + H2O = GDP + phosphate + H(+). Regulated by guanine nucleotide exchange factors (GEFs) which promote the exchange of bound GDP for free GTP. Regulated by GTPase activating proteins (GAPs) which increase the GTP hydrolysis activity at the ER membrane. Inhibited by GDP dissociation inhibitors (GDIs) which prevent Rab-GDP dissociation. Its function is as follows. The small GTPases Rab are key regulators of intracellular membrane trafficking, from the formation of transport vesicles to their fusion with membranes. Rabs cycle between an inactive GDP-bound form and an active GTP-bound form that is able to recruit to membranes different sets of downstream effectors directly responsible for vesicle formation, movement, tethering and fusion. RAB18 is required for the localization of ZFYVE1 to lipid droplets and for its function in mediating the formation of endoplasmic reticulum-lipid droplets (ER-LD) contacts. Also required for maintaining endoplasmic reticulum structure. Plays a role in apical endocytosis/recycling. Plays a key role in eye and brain development and neurodegeneration. This chain is Ras-related protein Rab-18, found in Rattus norvegicus (Rat).